The sequence spans 150 residues: Endoribonuclease YbeY (150 aa).

Zn(2+) is bound by residues His-108, His-112, and His-118.

It belongs to the endoribonuclease YbeY family. Requires Zn(2+) as cofactor.

The protein localises to the cytoplasm. In terms of biological role, single strand-specific metallo-endoribonuclease involved in late-stage 70S ribosome quality control and in maturation of the 3' terminus of the 16S rRNA. This is Endoribonuclease YbeY from Methylococcus capsulatus (strain ATCC 33009 / NCIMB 11132 / Bath).